A 113-amino-acid polypeptide reads, in one-letter code: Large ribosomal subunit protein P2 (113 aa).

Residues 60-113 are disordered; the sequence is SKVSSLSAGAGPSGGAAAAGADAGAAEAEKEEEPQEEEADVNMGDIFGGDDEDY. The segment covering 74-85 has biased composition (low complexity); it reads GAAAAGADAGAA. Residues 88–99 are compositionally biased toward acidic residues; sequence EKEEEPQEEEAD.

This sequence belongs to the eukaryotic ribosomal protein P1/P2 family. P1 and P2 exist as dimers at the large ribosomal subunit. Post-translationally, phosphorylated.

Its function is as follows. Plays an important role in the elongation step of protein synthesis. The protein is Large ribosomal subunit protein P2 of Euplotes raikovi.